The primary structure comprises 176 residues: Adipose-secreted signaling protein (176 aa).

The interval 1–30 is disordered; that stretch reads MATAGKGSKGKGTGVRFTPEGTQGHPQEGT. Positions 20–30 are enriched in polar residues; the sequence is EGTQGHPQEGT.

Belongs to the ADISSP family.

Its function is as follows. May be involved in thermogenesis and glucose homeostasis. In Taeniopygia guttata (Zebra finch), this protein is Adipose-secreted signaling protein.